The following is a 607-amino-acid chain: Elongation factor 4 (607 aa).

A tr-type G domain is found at 11-193; sequence SRIRNFSIIA…QVVEKVPAPA (183 aa). Residues 23–28 and 140–143 each bind GTP; these read DHGKST and NKID.

This sequence belongs to the TRAFAC class translation factor GTPase superfamily. Classic translation factor GTPase family. LepA subfamily.

It is found in the cell membrane. The catalysed reaction is GTP + H2O = GDP + phosphate + H(+). Required for accurate and efficient protein synthesis under certain stress conditions. May act as a fidelity factor of the translation reaction, by catalyzing a one-codon backward translocation of tRNAs on improperly translocated ribosomes. Back-translocation proceeds from a post-translocation (POST) complex to a pre-translocation (PRE) complex, thus giving elongation factor G a second chance to translocate the tRNAs correctly. Binds to ribosomes in a GTP-dependent manner. This is Elongation factor 4 from Shouchella clausii (strain KSM-K16) (Alkalihalobacillus clausii).